Reading from the N-terminus, the 71-residue chain is UPF0346 protein SPG_0874 (71 aa).

The protein belongs to the UPF0346 family.

This chain is UPF0346 protein SPG_0874, found in Streptococcus pneumoniae serotype 19F (strain G54).